A 268-amino-acid chain; its full sequence is Peptide transport system ATP-binding protein SapF (268 aa).

The 246-residue stretch at 6 to 251 (LEVRNLSKTF…PLHELTKRLI (246 aa)) folds into the ABC transporter domain. Position 47-54 (47-54 (GENGSGKS)) interacts with ATP.

This sequence belongs to the ABC transporter superfamily.

Its subcellular location is the cell inner membrane. Involved in a peptide intake transport system that plays a role in the resistance to antimicrobial peptides. This is Peptide transport system ATP-binding protein SapF (sapF) from Escherichia coli O6:H1 (strain CFT073 / ATCC 700928 / UPEC).